The sequence spans 318 residues: MATENKILILGATGAIGRHIVWASIKAGNPTYALVRKTSDNVNKPKLTEAANPETKEELLKNYQASGVILLEGDINDHETLVNAIKQVDTVICAAGRLLIEDQVKVIKAIKEAGNVKRFFPSEFGLDVDRHDAVEPVRQVFEEKASIRRVVESEGVPYTYLCCHAFTGYFLRNLAQIDATDPPRDKVVILGDGNVRGAYVTEADVGTYTIRAANDPNTLNKAVHIRLPNNYLTANEVIALWEKKIGKTLEKTYVSEEQVLKDIQTSSFPHNYLLALYHSQQIKGDAVYEIDPAKDVEAYDAYPDVKYTTADEYLNQFV.

NADP(+) is bound by residues 11 to 17 (GATGAIG), arginine 36, and lysine 44. The Proton acceptor role is filled by lysine 144. Arginine 148 serves as a coordination point for NADP(+).

This sequence belongs to the NmrA-type oxidoreductase family. Isoflavone reductase subfamily.

It catalyses the reaction (3R)-vestitone + NADP(+) = 2'-hydroxyformononetin + NADPH + 2 H(+). It participates in phytoalexin biosynthesis; pterocarpan phytoalexin biosynthesis. Functionally, reduces achiral isoflavones to chiral isoflavanones during the biosynthesis of chiral pterocarpan phytoalexins. The reduction product (sophrol) is a third isomer, which represents the penultimate intermediate in the synthesis of the phytoalexin (+)-pisatin, the major phytoalexin in pea. This is Isoflavone reductase (IFR) from Pisum sativum (Garden pea).